Consider the following 89-residue polypeptide: Small ribosomal subunit protein uS15 (89 aa).

It belongs to the universal ribosomal protein uS15 family. Part of the 30S ribosomal subunit. Forms a bridge to the 50S subunit in the 70S ribosome, contacting the 23S rRNA.

Its function is as follows. One of the primary rRNA binding proteins, it binds directly to 16S rRNA where it helps nucleate assembly of the platform of the 30S subunit by binding and bridging several RNA helices of the 16S rRNA. Functionally, forms an intersubunit bridge (bridge B4) with the 23S rRNA of the 50S subunit in the ribosome. This Synechococcus elongatus (strain ATCC 33912 / PCC 7942 / FACHB-805) (Anacystis nidulans R2) protein is Small ribosomal subunit protein uS15.